The primary structure comprises 148 residues: Snaclec 3 (148 aa).

Positions M1–A23 are cleaved as a signal peptide. 3 disulfide bridges follow: C27–C38, C55–C144, and C121–C136. Residues Y34–K145 enclose the C-type lectin domain.

It belongs to the snaclec family. As to quaternary structure, heterodimer; disulfide-linked.

It is found in the secreted. In terms of biological role, interferes with one step of hemostasis (modulation of platelet aggregation, or coagulation cascade, for example). The sequence is that of Snaclec 3 from Daboia siamensis (Eastern Russel's viper).